The primary structure comprises 448 residues: tRNA wybutosine-synthesizing protein 2 homolog (448 aa).

S-adenosyl-L-methionine is bound by residues S218, K225, E265, and 293–294 (DN).

This sequence belongs to the class I-like SAM-binding methyltransferase superfamily. TRM5/TYW2 family.

It catalyses the reaction 4-demethylwyosine(37) in tRNA(Phe) + S-adenosyl-L-methionine = 4-demethyl-7-[(3S)-3-amino-3-carboxypropyl]wyosine(37) in tRNA(Phe) + S-methyl-5'-thioadenosine + H(+). It participates in tRNA modification; wybutosine-tRNA(Phe) biosynthesis. Its function is as follows. S-adenosyl-L-methionine-dependent transferase that acts as a component of the wybutosine biosynthesis pathway. Wybutosine is a hyper modified guanosine with a tricyclic base found at the 3'-position adjacent to the anticodon of eukaryotic phenylalanine tRNA. Catalyzes the transfer of the alpha-amino-alpha-carboxypropyl (acp) group from S-adenosyl-L-methionine to the C-7 position of 4-demethylwyosine (imG-14) to produce wybutosine-86. The chain is tRNA wybutosine-synthesizing protein 2 homolog (TRMT12) from Macaca fascicularis (Crab-eating macaque).